The primary structure comprises 189 residues: MIAGVDEAGRGPLVGSVVAAAVILDPHNPIDGLNDSKKLTEKKREKLFVEIQEKALAWSIAEANHIEIDELNILQATFLAMRRAVDGLQIQPDKVLVDGNQIPKGISIHCEAIVGGDASHAEISAASILAKVYRDQQMKLLDEKYPLFGFAKHKGYPTKAHFQAIAIHGVVDEHRRSYAPVRRALNIDC.

Residues 1–189 form the RNase H type-2 domain; that stretch reads MIAGVDEAGR…PVRRALNIDC (189 aa). A divalent metal cation is bound by residues aspartate 6, glutamate 7, and aspartate 98.

Belongs to the RNase HII family. The cofactor is Mn(2+). It depends on Mg(2+) as a cofactor.

The protein resides in the cytoplasm. The catalysed reaction is Endonucleolytic cleavage to 5'-phosphomonoester.. Its function is as follows. Endonuclease that specifically degrades the RNA of RNA-DNA hybrids. The chain is Ribonuclease HII from Acinetobacter baylyi (strain ATCC 33305 / BD413 / ADP1).